The primary structure comprises 1187 residues: Serine/threonine-protein kinase SIK3 homolog (1187 aa).

The span at 1–15 shows a compositional bias: low complexity; sequence MAAVSSGAAAAAGIP. Residues 1 to 41 are disordered; the sequence is MAAVSSGAAAAAGIPNPNPNRERPQQQQQQQPASAALHPVA. The Protein kinase domain occupies 59–310; the sequence is YEMERTIGKG…MEQICKNKWM (252 aa). Residues 65 to 73 and K88 each bind ATP; that span reads IGKGNFAVV. The Proton acceptor role is filled by D181. T214 carries the phosphothreonine modification. Phosphoserine is present on S218. Residues 337–377 form the UBA domain; it reads LINEQVLMAMAEMGFDRERTLQSLHADSYDHYSATYSLLSD. Disordered regions lie at residues 548 to 587, 697 to 776, and 1060 to 1092; these read LKRP…VQRS, IQPS…PPGS, and CADA…GALQ. Residues 570–581 show a composition bias toward acidic residues; the sequence is VDEEGSDAEPDP. Residues 739–749 are compositionally biased toward polar residues; that stretch reads VQYQHGSALYQ.

Belongs to the protein kinase superfamily. CAMK Ser/Thr protein kinase family. SNF1 subfamily. Mg(2+) is required as a cofactor.

It carries out the reaction L-seryl-[protein] + ATP = O-phospho-L-seryl-[protein] + ADP + H(+). The enzyme catalyses L-threonyl-[protein] + ATP = O-phospho-L-threonyl-[protein] + ADP + H(+). This chain is Serine/threonine-protein kinase SIK3 homolog, found in Danio rerio (Zebrafish).